Here is a 275-residue protein sequence, read N- to C-terminus: Intercellular adhesion molecule 2 (275 aa).

An N-terminal signal peptide occupies residues 1 to 24; it reads MSSFSYRTLTVALFALICCPGSDE. Over 25–223 the chain is Extracellular; sequence KVFEVHVRPK…EIYEPVSDSQ (199 aa). Residues 41-98 enclose the Ig-like C2-type 1 domain; that stretch reads KGSLKVNCSTTCNQPEVGGLETSLDKILLDEQAQWKHYLVSNISHDTVLQCHFTCSGK. N-linked (GlcNAc...) asparagine glycans are attached at residues N47, N82, N105, N153, N176, and N187. 2 cysteine pairs are disulfide-bonded: C48–C91 and C52–C95. The region spanning 127 to 197 is the Ig-like C2-type 2 domain; sequence GKSFTIECRV…FSCLAVLDLM (71 aa). The cysteines at positions 134 and 190 are disulfide-linked. The chain crosses the membrane as a helical span at residues 224–248; the sequence is MVIIVTVVSVLLSLFVTSVLLCFIF. Residues 249–275 lie on the Cytoplasmic side of the membrane; that stretch reads GQHLRQQRMGTYGVRAAWRRLPQAFRP. Residues 251-275 form a required for interaction with EZR, MSN and RDX and co-localization to microvilli region; sequence HLRQQRMGTYGVRAAWRRLPQAFRP.

It belongs to the immunoglobulin superfamily. ICAM family. As to quaternary structure, interacts with RDX, EZR and MSN.

The protein localises to the membrane. It is found in the cell projection. It localises to the microvillus. Its function is as follows. ICAM proteins are ligands for the leukocyte adhesion protein LFA-1 (integrin alpha-L/beta-2). ICAM2 may play a role in lymphocyte recirculation by blocking LFA-1-dependent cell adhesion. It mediates adhesive interactions important for antigen-specific immune response, NK-cell mediated clearance, lymphocyte recirculation, and other cellular interactions important for immune response and surveillance. The sequence is that of Intercellular adhesion molecule 2 (ICAM2) from Pan troglodytes (Chimpanzee).